The primary structure comprises 328 residues: Phosphate acyltransferase (328 aa).

Belongs to the PlsX family. Homodimer. Probably interacts with PlsY.

It is found in the cytoplasm. The catalysed reaction is a fatty acyl-[ACP] + phosphate = an acyl phosphate + holo-[ACP]. Its pathway is lipid metabolism; phospholipid metabolism. Functionally, catalyzes the reversible formation of acyl-phosphate (acyl-PO(4)) from acyl-[acyl-carrier-protein] (acyl-ACP). This enzyme utilizes acyl-ACP as fatty acyl donor, but not acyl-CoA. The sequence is that of Phosphate acyltransferase from Staphylococcus aureus (strain Mu3 / ATCC 700698).